The sequence spans 275 residues: Large ribosomal subunit protein uL2 (275 aa).

Residues 38–53 (SSKAGRNNNGRITTRH) are compositionally biased toward polar residues. 2 disordered regions span residues 38 to 59 (SSKA…GGHK) and 224 to 257 (AMNP…KGFR).

It belongs to the universal ribosomal protein uL2 family. In terms of assembly, part of the 50S ribosomal subunit. Forms a bridge to the 30S subunit in the 70S ribosome.

One of the primary rRNA binding proteins. Required for association of the 30S and 50S subunits to form the 70S ribosome, for tRNA binding and peptide bond formation. It has been suggested to have peptidyltransferase activity; this is somewhat controversial. Makes several contacts with the 16S rRNA in the 70S ribosome. This Burkholderia multivorans (strain ATCC 17616 / 249) protein is Large ribosomal subunit protein uL2.